The sequence spans 142 residues: AP-2 complex subunit sigma (142 aa).

It belongs to the adaptor complexes small subunit family. In terms of assembly, adaptor protein complex 2 (AP-2) is a heterotetramer composed of two large adaptins (alpha-type and beta-type subunits), a medium adaptin (mu-type subunit AP50) and a small adaptin (sigma-type subunit AP17).

It localises to the cell membrane. It is found in the membrane. Its subcellular location is the coated pit. In terms of biological role, component of the adaptor complexes which link clathrin to receptors in coated vesicles. Clathrin-associated protein complexes are believed to interact with the cytoplasmic tails of membrane proteins, leading to their selection and concentration. The chain is AP-2 complex subunit sigma (ap2s1) from Dictyostelium discoideum (Social amoeba).